The chain runs to 357 residues: 3-isopropylmalate dehydrogenase (357 aa).

Substrate contacts are provided by Arg-97, Arg-107, Arg-135, and Asp-224. Mg(2+)-binding residues include Asp-224, Asp-248, and Asp-252. An NAD(+)-binding site is contributed by 282 to 294 (GSAPDIAGQDKAN).

The protein belongs to the isocitrate and isopropylmalate dehydrogenases family. LeuB type 1 subfamily. Homodimer. The cofactor is Mg(2+). Requires Mn(2+) as cofactor.

The protein resides in the cytoplasm. The enzyme catalyses (2R,3S)-3-isopropylmalate + NAD(+) = 4-methyl-2-oxopentanoate + CO2 + NADH. The protein operates within amino-acid biosynthesis; L-leucine biosynthesis; L-leucine from 3-methyl-2-oxobutanoate: step 3/4. Functionally, catalyzes the oxidation of 3-carboxy-2-hydroxy-4-methylpentanoate (3-isopropylmalate) to 3-carboxy-4-methyl-2-oxopentanoate. The product decarboxylates to 4-methyl-2 oxopentanoate. The protein is 3-isopropylmalate dehydrogenase of Synechococcus sp. (strain CC9605).